The following is a 189-amino-acid chain: Coatomer subunit zeta (189 aa).

This sequence belongs to the adaptor complexes small subunit family. As to quaternary structure, oligomeric complex that consists of at least the alpha, beta, beta', gamma, delta, epsilon and zeta subunits.

It localises to the cytoplasm. Its subcellular location is the golgi apparatus membrane. The protein resides in the cytoplasmic vesicle. The protein localises to the COPI-coated vesicle membrane. Its function is as follows. The coatomer is a cytosolic protein complex that binds to dilysine motifs and reversibly associates with Golgi non-clathrin-coated vesicles, which further mediate biosynthetic protein transport from the ER, via the Golgi up to the trans Golgi network. Coatomer complex is required for budding from Golgi membranes, and is essential for the retrograde Golgi-to-ER transport of dilysine-tagged proteins. The zeta subunit may be involved in regulating the coat assembly and, hence, the rate of biosynthetic protein transport due to its association-dissociation properties with the coatomer complex. The protein is Coatomer subunit zeta (RET3) of Saccharomyces cerevisiae (strain ATCC 204508 / S288c) (Baker's yeast).